A 243-amino-acid chain; its full sequence is Triosephosphate isomerase (243 aa).

9-11 contacts substrate; the sequence is NWK. Residue His-96 is the Electrophile of the active site. Residue Glu-165 is the Proton acceptor of the active site. Substrate contacts are provided by residues Gly-171, Ser-204, and 225–226; that span reads GG.

Belongs to the triosephosphate isomerase family. Homodimer.

It is found in the cytoplasm. It carries out the reaction D-glyceraldehyde 3-phosphate = dihydroxyacetone phosphate. It functions in the pathway carbohydrate biosynthesis; gluconeogenesis. It participates in carbohydrate degradation; glycolysis; D-glyceraldehyde 3-phosphate from glycerone phosphate: step 1/1. Involved in the gluconeogenesis. Catalyzes stereospecifically the conversion of dihydroxyacetone phosphate (DHAP) to D-glyceraldehyde-3-phosphate (G3P). The protein is Triosephosphate isomerase of Nostoc punctiforme (strain ATCC 29133 / PCC 73102).